Consider the following 362-residue polypeptide: Putative G-protein coupled receptor B0244.5 (362 aa).

Over 1–47 the chain is Extracellular; that stretch reads MQNIFENCSYHSKYEPYFLNCTNTTNQCVLIQDVGIIQAIDFWANLC. N-linked (GlcNAc...) asparagine glycans are attached at residues Asn7, Asn20, and Asn23. A helical transmembrane segment spans residues 48–68; the sequence is IPFTLFVIAFILNGYYLSILI. The Cytoplasmic segment spans residues 69–81; that stretch reads PEFRKMNDTTKKQ. The chain crosses the membrane as a helical span at residues 82-102; sequence YIFVVSRGISSLSASSIMMVL. Topologically, residues 103–125 are extracellular; the sequence is RLLKMLSTSFTVYFLFFLIDDLS. Residues 126 to 145 form a helical membrane-spanning segment; the sequence is FYSLLGSYVGSTLLLYLATV. Over 146 to 161 the chain is Cytoplasmic; the sequence is RPIFYSIQISVRIVYK. A helical transmembrane segment spans residues 162–182; the sequence is FALVNVLLAVVLAVTTAIFQA. Residues 183-204 are Extracellular-facing; sequence AEVSDGFFHCDVQHCQPIINIA. The helical transmembrane segment at 205–225 threads the bilayer; that stretch reads MFVIIATSFLIPIITLTFVLV. The Cytoplasmic segment spans residues 226–255; it reads TLCFQKSRTQSIGNFTVDNSVYKSARTRLA. The helical transmembrane segment at 256 to 276 threads the bilayer; sequence WTLFTFTLISLTEMIPSSFLV. The Extracellular portion of the chain corresponds to 277–295; the sequence is NLRVEDTITICVNFYQADH. A helical transmembrane segment spans residues 296–316; the sequence is LFIPAIMNSFQTLAWGIALIV. Topologically, residues 317 to 362 are cytoplasmic; the sequence is DPLCALLFDPRIRKVWVEHVSRLSIIIGRSFEACCHSNLNKEIQDK.

It belongs to the G-protein coupled receptor 1 family. B0244 subfamily.

The protein resides in the cell membrane. The sequence is that of Putative G-protein coupled receptor B0244.5 from Caenorhabditis elegans.